Consider the following 396-residue polypeptide: Ribosomal RNA large subunit methyltransferase I (396 aa).

In terms of domain architecture, PUA spans 2–81 (TVRLILAKGR…ESIDIDFFVR (80 aa)).

This sequence belongs to the methyltransferase superfamily. RlmI family.

It localises to the cytoplasm. It catalyses the reaction cytidine(1962) in 23S rRNA + S-adenosyl-L-methionine = 5-methylcytidine(1962) in 23S rRNA + S-adenosyl-L-homocysteine + H(+). Its function is as follows. Specifically methylates the cytosine at position 1962 (m5C1962) of 23S rRNA. This Erwinia tasmaniensis (strain DSM 17950 / CFBP 7177 / CIP 109463 / NCPPB 4357 / Et1/99) protein is Ribosomal RNA large subunit methyltransferase I.